Here is a 254-residue protein sequence, read N- to C-terminus: Triosephosphate isomerase (254 aa).

Substrate is bound at residue 9–11 (NWK). The active-site Electrophile is H96. Catalysis depends on E169, which acts as the Proton acceptor. Substrate is bound by residues G175, S215, and 236–237 (GG).

This sequence belongs to the triosephosphate isomerase family. Homodimer.

The protein resides in the cytoplasm. The catalysed reaction is D-glyceraldehyde 3-phosphate = dihydroxyacetone phosphate. Its pathway is carbohydrate biosynthesis; gluconeogenesis. It functions in the pathway carbohydrate degradation; glycolysis; D-glyceraldehyde 3-phosphate from glycerone phosphate: step 1/1. Functionally, involved in the gluconeogenesis. Catalyzes stereospecifically the conversion of dihydroxyacetone phosphate (DHAP) to D-glyceraldehyde-3-phosphate (G3P). The protein is Triosephosphate isomerase of Borrelia duttonii (strain Ly).